The chain runs to 439 residues: Tol-Pal system protein TolB (439 aa).

The N-terminal stretch at 1–21 (MRFRLALSLLSLALFAAPAAA) is a signal peptide.

The protein belongs to the TolB family. The Tol-Pal system is composed of five core proteins: the inner membrane proteins TolA, TolQ and TolR, the periplasmic protein TolB and the outer membrane protein Pal. They form a network linking the inner and outer membranes and the peptidoglycan layer.

It localises to the periplasm. Functionally, part of the Tol-Pal system, which plays a role in outer membrane invagination during cell division and is important for maintaining outer membrane integrity. This is Tol-Pal system protein TolB from Rhizorhabdus wittichii (strain DSM 6014 / CCUG 31198 / JCM 15750 / NBRC 105917 / EY 4224 / RW1) (Sphingomonas wittichii).